The sequence spans 257 residues: Uracil phosphoribosyltransferase homolog (257 aa).

GTP is bound by residues Arg81, Arg90, and 124 to 127 (EKGN). Arg134 is a 5-phospho-alpha-D-ribose 1-diphosphate binding site. Residues Arg151 and Arg180 each contribute to the GTP site. A 5-phospho-alpha-D-ribose 1-diphosphate-binding site is contributed by 186 to 194 (YPILSTGNT). Residue 247 to 249 (THF) coordinates uracil.

It belongs to the UPRTase family.

It localises to the cytoplasm. Its subcellular location is the nucleus. The chain is Uracil phosphoribosyltransferase homolog (uprt) from Danio rerio (Zebrafish).